The sequence spans 209 residues: Uracil phosphoribosyltransferase (209 aa).

Residues R79, R104, and 131–139 (DPMLATGGS) each bind 5-phospho-alpha-D-ribose 1-diphosphate. Uracil contacts are provided by residues I194 and 199–201 (GDA). D200 contributes to the 5-phospho-alpha-D-ribose 1-diphosphate binding site.

Belongs to the UPRTase family. It depends on Mg(2+) as a cofactor.

It catalyses the reaction UMP + diphosphate = 5-phospho-alpha-D-ribose 1-diphosphate + uracil. Its pathway is pyrimidine metabolism; UMP biosynthesis via salvage pathway; UMP from uracil: step 1/1. With respect to regulation, allosterically activated by GTP. In terms of biological role, catalyzes the conversion of uracil and 5-phospho-alpha-D-ribose 1-diphosphate (PRPP) to UMP and diphosphate. The polypeptide is Uracil phosphoribosyltransferase (Enterococcus faecalis (strain ATCC 700802 / V583)).